A 103-amino-acid chain; its full sequence is Zinc-containing ferredoxin (103 aa).

The N-terminal extension stretch occupies residues 1 to 36 (GIDPNYRTSKPVVGDHSGHKIYGPVESPKVLGVHGT). Histidine 19 contributes to the Zn(2+) binding site. An N6-methyllysine modification is found at lysine 29. Zn(2+) is bound at residue histidine 34. 2 4Fe-4S ferredoxin-type domains span residues 35–65 (GTIVGVDFDLCIADGSCITACPVNVFQWYET) and 74–103 (KADPVNEQACIFCMACVNVCPVAAIDVKPP). Cysteine 45 and cysteine 51 together coordinate [3Fe-4S] cluster. Residue cysteine 55 coordinates [4Fe-4S] cluster. Residue aspartate 76 participates in Zn(2+) binding. Positions 83, 86, and 89 each coordinate [4Fe-4S] cluster. Residue cysteine 93 participates in [3Fe-4S] cluster binding.

Requires [3Fe-4S] cluster as cofactor. [4Fe-4S] cluster serves as cofactor. Zn(2+) is required as a cofactor.

In terms of biological role, ferredoxins are iron-sulfur proteins that transfer electrons in a wide variety of metabolic reactions. This chain is Zinc-containing ferredoxin (zfx), found in Sulfolobus acidocaldarius (strain ATCC 33909 / DSM 639 / JCM 8929 / NBRC 15157 / NCIMB 11770).